We begin with the raw amino-acid sequence, 246 residues long: MATPGSEATWLWIGTIGMVLGTVYFAVRGRGSTDPEQQTYYIITTLIPAIAAAAYLAMATGLGVISMPIRGTEVIDIYWARYADWLLTTPLLIIDLALVAGARKQTLYKLIIIDAIMILGGLAGSMMQQGAVIRIVWWAVSTAAFIILLYYLLGELSERARSRSAETGIVFNRLRNITLGLWALYPIVWILGTGGGFGIIAVTTEIMLYVMLDIGTKIGFGAVLLESQDVLQAASHPSSTNDIKSH.

The next 7 helical transmembrane spans lie at 7 to 27, 45 to 65, 82 to 102, 107 to 127, 135 to 155, 182 to 202, and 205 to 225; these read EATW…YFAV, TLIP…LGVI, YADW…VAGA, LYKL…GSMM, IVWW…LLGE, WALY…IIAV, and EIML…AVLL. K217 is subject to N6-(retinylidene)lysine.

The protein belongs to the archaeal/bacterial/fungal opsin family. In terms of processing, the covalent binding of retinal to the apoprotein, bacterioopsin, generates bacteriorhodopsin.

It localises to the cell membrane. In terms of biological role, has no proton-pumping activity but is potentially capable of functioning as a sensory SRII-like protein. The chromophore contains 36.5% all-trans-, 7.6% 11-cis- and 56.4% 13-cis-retinal in the dark and 30.1% 11-cis- and 47.7% 13-cis-retinal upon illumination with &gt;460 nm light. This Haloquadratum walsbyi (strain DSM 16790 / HBSQ001) protein is Bacteriorhodopsin-II-like protein (bop2).